The sequence spans 306 residues: tRNA pseudouridine synthase B (306 aa).

Aspartate 47 serves as the catalytic Nucleophile.

It belongs to the pseudouridine synthase TruB family. Type 1 subfamily.

The enzyme catalyses uridine(55) in tRNA = pseudouridine(55) in tRNA. Functionally, responsible for synthesis of pseudouridine from uracil-55 in the psi GC loop of transfer RNAs. In Neisseria meningitidis serogroup A / serotype 4A (strain DSM 15465 / Z2491), this protein is tRNA pseudouridine synthase B.